The sequence spans 99 residues: MGKKVKKAVKKVTKSVKKVVKEGARPVKQVAGGLAGLAGGTGEAQMVEVPQAAAQIVDVPEKEVSTEDEAQTESGRKKARAGGKKSLSVARSSGGGINI.

Residues 59 to 99 (VPEKEVSTEDEAQTESGRKKARAGGKKSLSVARSSGGGINI) are disordered.

Belongs to the T7likevirus protein 7.3 family.

It is found in the virion. Plays an essential role most probably in virion tail assembly. May form a scaffold around which gp11 and gp12 polymerize. Gets ejected from the infecting particle into the bacterial cell. This chain is Protein 7.3, found in Escherichia phage T7 (Bacteriophage T7).